The sequence spans 906 residues: Formin-like protein 16 (906 aa).

Positions 1-28 (MAPAPSPTPLPLFLLLLLLVGVAPLAAA) are cleaved as a signal peptide. The tract at residues 34–76 (QTRFPSTRTPAFATPPPITSPSPSPGTPTATPSSSPPSSSGKR) is disordered. Positions 46 to 59 (ATPPPITSPSPSPG) are enriched in pro residues. A compositionally biased stretch (low complexity) spans 60–73 (TPTATPSSSPPSSS). The helical transmembrane segment at 81-101 (VAVVSTALSSFAVSGLAFFLF) threads the bilayer. Disordered stretches follow at residues 113 to 149 (AGGAGQHYGGAQGGALTGKRPEREPKRPARGNMVDEN), 161 to 223 (KEGD…SLDS), 250 to 404 (AYAR…DQQA), 451 to 474 (RKTKPADSKDASGGSTSAGLGRSN), 677 to 702 (GSLAKSTDGGNPAASSTSQGPSREER), and 834 to 906 (LQQQ…SDEE). Residues 114–128 (GGAGQHYGGAQGGAL) show a composition bias toward gly residues. The span at 174–185 (SRRPPQPPPPRP) shows a compositional bias: pro residues. The segment covering 186 to 196 (YRAERRQDAHE) has biased composition (basic and acidic residues). Positions 270–294 (SPSPAPAPAARPASPSPSLPLPPGR) are enriched in pro residues. The span at 295-310 (ESPSRPQSIAAAAVAS) shows a compositional bias: low complexity. The segment covering 311 to 383 (PAPPPPPPPK…KGGPPPPPPK (73 aa)) has biased composition (pro residues). Residues 396-849 (PTGSADQQAK…PTPPPSSSQP (454 aa)) form the FH2 domain. 2 stretches are compositionally biased toward polar residues: residues 463–474 (GGSTSAGLGRSN) and 677–697 (GSLAKSTDGGNPAASSTSQGP). Residues 847–866 (SQPAAPAATTKGAADDAPAP) show a composition bias toward low complexity.

It belongs to the formin-like family. Class-I subfamily.

Its subcellular location is the membrane. The protein is Formin-like protein 16 (FH16) of Oryza sativa subsp. japonica (Rice).